The primary structure comprises 122 residues: UPF0102 protein RL0336 (122 aa).

This sequence belongs to the UPF0102 family.

The polypeptide is UPF0102 protein RL0336 (Rhizobium johnstonii (strain DSM 114642 / LMG 32736 / 3841) (Rhizobium leguminosarum bv. viciae)).